A 548-amino-acid chain; its full sequence is Probable inorganic phosphate transporter 1-5 (548 aa).

The Cytoplasmic segment spans residues 1-23; that stretch reads MVQDRKVLDALDTAKTQWYHFTA. Residues 24–44 form a helical membrane-spanning segment; it reads VVIAGMGFFTDAYDLFSISLV. Residues 45–69 lie on the Extracellular side of the membrane; the sequence is TKLLGRIYYFNPASKSPGSLPPNVS. Residues 70–90 form a helical membrane-spanning segment; the sequence is AAVNGVAFCGTLAGQLFFGWL. At 91 to 98 the chain is on the cytoplasmic side; that stretch reads GDKMGRKK. The chain crosses the membrane as a helical span at residues 99–119; sequence VYGMTLMLMVICCLASGLSFG. Over 120-123 the chain is Extracellular; it reads SSAK. The chain crosses the membrane as a helical span at residues 124–144; the sequence is GVMATLCFFRFWLGFGIGGDY. Over 145–163 the chain is Cytoplasmic; that stretch reads PLSATIMSEYANKRTRGAF. The chain crosses the membrane as a helical span at residues 164–184; the sequence is IAAVFAMQGFGNLTGGIVAII. The Extracellular portion of the chain corresponds to 185 to 210; that stretch reads VSAAFKLRFDAPAYRDDRAGSTVPQA. A helical membrane pass occupies residues 211–231; that stretch reads DYAWRIVLMFGAIPALLTYYW. At 232 to 303 the chain is on the cytoplasmic side; it reads RMKMPETARY…REFARRHGHH (72 aa). The helical transmembrane segment at 304-324 threads the bilayer; sequence LLGTTVCWFVLDIAYYSQNLF. Over 325-355 the chain is Extracellular; it reads QKDIYTAVQWLPKADTMSALEEMFKISRAQT. The chain crosses the membrane as a helical span at residues 356–376; that stretch reads LVALCGTIPGYWFTVLFIDIV. The Cytoplasmic segment spans residues 377-378; sequence GR. The chain crosses the membrane as a helical span at residues 379-399; the sequence is FAIQLGGFFLMTAFMLGLAVP. The Extracellular segment spans residues 400 to 405; sequence YHHWTT. Residues 406 to 426 traverse the membrane as a helical segment; that stretch reads PGNHVGFVVMYAFTFFFANFG. The Cytoplasmic portion of the chain corresponds to 427–449; the sequence is PNSTTFIVPAEIFPARLRSTCHG. The chain crosses the membrane as a helical span at residues 450–470; the sequence is ISSAAGKMGAIVGSFGFLYAA. Topologically, residues 471 to 490 are extracellular; the sequence is QSTDPSKTDAGYPRGIGVRN. Residues 491 to 511 form a helical membrane-spanning segment; it reads SLFLLAGCNVVGFLFTFLVPE. At 512 to 548 the chain is on the cytoplasmic side; it reads SKGKSLEELSGENEMEAEPAAATNSYRQTVPDSGQSE. A disordered region spans residues 518–548; that stretch reads EELSGENEMEAEPAAATNSYRQTVPDSGQSE. Over residues 533–548 the composition is skewed to polar residues; sequence ATNSYRQTVPDSGQSE.

Belongs to the major facilitator superfamily. Phosphate:H(+) symporter (TC 2.A.1.9) family. Expressed at low levels in roots.

It localises to the membrane. Its function is as follows. High-affinity transporter for external inorganic phosphate. This is Probable inorganic phosphate transporter 1-5 (PHT1-5) from Oryza sativa subsp. japonica (Rice).